We begin with the raw amino-acid sequence, 624 residues long: Ceramide transfer protein (624 aa).

Residues 1–11 show a composition bias toward polar residues; sequence MSDNQSWNSSG. Residues 1–24 form a disordered region; it reads MSDNQSWNSSGSEEDPETESGPPV. Positions 23–117 constitute a PH domain; the sequence is PVERCGVLSK…WIDAIEQHKT (95 aa). Ser126 bears the Phosphoserine mark. Ser132 is subject to Phosphoserine; by PKD. Position 135 is a phosphoserine (Ser135). Residues 263–303 are a coiled coil; sequence IELMVKREDSWQKRLDKETEKKRRTEEAYKNAMTELKKKSH. Ser315 is subject to Phosphoserine. The FFAT motif lies at 321–327; that stretch reads EFFDAVE. Tyr372 carries the phosphotyrosine modification. Phosphoserine is present on residues Ser373, Ser377, and Ser380. An START domain is found at 389–618; that stretch reads DVHRFSSQVE…FTSYVQEKTA (230 aa). An N-acylsphing-4-enine contacts are provided by Glu472, Gln493, Asn530, and Tyr579.

Interacts with VAPA and VAPB. Interaction with VAPB is less efficient than with VAPA. Interacts (via FFAT motif) with the MOSPD2 (via MSP domain). In terms of processing, phosphorylation on Ser-132 decreases the affinity toward phosphatidylinositol 4-phosphate at Golgi membranes and reduces ceramide transfer activity. Inactivated by hyperphosphorylation of serine residues by CSNK1G2/CK1 that triggers dissociation from the Golgi complex, thus down-regulating ER-to-Golgi transport of ceramide and sphingomyelin synthesis.

It is found in the cytoplasm. Its subcellular location is the golgi apparatus. It localises to the endoplasmic reticulum. The enzyme catalyses N-hexadecanoylsphing-4-enine(in) = N-hexadecanoylsphing-4-enine(out). Shelters ceramides and diacylglycerol lipids inside its START domain and mediates the intracellular trafficking of ceramides and diacylglycerol lipids in a non-vesicular manner. This Pongo abelii (Sumatran orangutan) protein is Ceramide transfer protein (CERT1).